The primary structure comprises 971 residues: Dynamin-like GTPase OPA1, mitochondrial (971 aa).

Residues 1–89 (MLRVGRAVAC…GGWRYQQHRS (89 aa)) constitute a mitochondrion transit peptide. The Mitochondrial matrix segment spans residues 90–98 (FWMLRLASR). Residues 99–115 (LLKLRYIVLGSAVGGGY) traverse the membrane as a helical segment. The Mitochondrial intermembrane segment spans residues 116–781 (TAKKTYEEWK…SVINDMVGPD (666 aa)). A disordered region spans residues 204 to 224 (EAPVTATPEASDKQFKKSSDK). Basic and acidic residues predominate over residues 213 to 224 (ASDKQFKKSSDK). The stretch at 219-265 (KKSSDKEKVDQLQEELLRTQMKYQRMLERLEKENKDLRKVVLQKDEK) forms a coiled coil. In terms of domain architecture, Dynamin-type G spans 297–572 (QDHLPRVVVV…FWKMVRESVE (276 aa)). Positions 307-314 (GDQSAGKT) are G1 motif. Positions 310, 312, 313, 314, 315, and 329 each coordinate GTP. T314 is a Mg(2+) binding site. The segment at 333 to 336 (MMTR) is G2 motif. Residues T335 and D410 each coordinate Mg(2+). Residues 410-413 (DLPG) are G3 motif. The interval 478–481 (TKVD) is G4 motif. Positions 479, 481, and 514 each coordinate GTP. The interval 512–515 (VVTG) is G5 motif. Stalk region regions lie at residues 600-847 (DRNE…IKDT) and 885-939 (CNDV…VHLI). The segment at 747-867 (TDKPQWDAAI…QKALQHCNLC (121 aa)) is paddle region. Residues 782–792 (WKQRWMSWKNR) lie within the membrane without spanning it. Over 793 to 971 (SPEQHTRNET…AFIEALHKEK (179 aa)) the chain is Mitochondrial intermembrane. An intrachain disulfide couples C867 to C885. Residues 906–971 (RQQLTNTEVR…AFIEALHKEK (66 aa)) are a coiled coil.

The protein belongs to the TRAFAC class dynamin-like GTPase superfamily. Dynamin/Fzo/YdjA family. As to quaternary structure, oligomeric complex consisting of membrane-bound and soluble forms of OPA1. Post-translationally, cleaved by OMA1 or YME1L downstream of the transmembrane region in response to different signals to generate soluble forms. Cleaved by OMA1 at position S1 following stress conditions, generating the short soluble form (Dynamin-like GTPase OPA1, short form; S-OPA1). In terms of tissue distribution, strongly expressed in the brain, ovary and skeletal muscle. In the brain, expression of the mRNA was observed specifically in motor neurons, in nucleus oculomotorius, in nucleus valvulae lateralis, in the medulla oblongata and in the spinal cord.

Its subcellular location is the mitochondrion inner membrane. It is found in the mitochondrion intermembrane space. It carries out the reaction GTP + H2O = GDP + phosphate + H(+). Dynamin-related GTPase that is essential for normal mitochondrial morphology by mediating fusion of the mitochondrial inner membranes, regulating cristae morphology and maintaining respiratory chain function. Exists in two forms: the transmembrane, long form (Dynamin-like GTPase OPA1, long form; L-OPA1), which is tethered to the inner mitochondrial membrane, and the short soluble form (Dynamin-like GTPase OPA1, short form; S-OPA1), which results from proteolytic cleavage and localizes in the intermembrane space. Both forms (L-OPA1 and S-OPA1) cooperate to catalyze the fusion of the mitochondrial inner membrane. The equilibrium between L-OPA1 and S-OPA1 is essential: excess levels of S-OPA1, produced by cleavage by OMA1 following loss of mitochondrial membrane potential, lead to an impaired equilibrium between L-OPA1 and S-OPA1, inhibiting mitochondrial fusion. The balance between L-OPA1 and S-OPA1 also influences cristae shape and morphology. Its role in mitochondrial morphology is required for mitochondrial genome maintenance. Its function is as follows. Constitutes the transmembrane long form (L-OPA1) that plays a central role in mitochondrial inner membrane fusion and cristae morphology. L-OPA1 and the soluble short form (S-OPA1) form higher-order helical assemblies that coordinate the fusion of mitochondrial inner membranes. Inner membrane-anchored L-OPA1 molecules initiate membrane remodeling by recruiting soluble S-OPA1 to rapidly polymerize into a flexible cylindrical scaffold encaging the mitochondrial inner membrane. Once at the membrane surface, the formation of S-OPA1 helices induce bilayer curvature. OPA1 dimerization through the paddle region, which inserts into cardiolipin-containing membrane, promotes GTP hydrolysis and the helical assembly of a flexible OPA1 lattice on the membrane, which drives membrane curvature and mitochondrial fusion. Plays a role in the maintenance and remodeling of mitochondrial cristae, some invaginations of the mitochondrial inner membrane that provide an increase in the surface area. Probably acts by forming helical filaments at the inside of inner membrane tubes with the shape and dimensions of crista junctions. In terms of biological role, constitutes the soluble short form (S-OPA1) generated by cleavage by OMA1, which plays a central role in mitochondrial inner membrane fusion and cristae morphology. The transmembrane long form (L-OPA1) and the S-OPA1 form higher-order helical assemblies that coordinate the fusion of mitochondrial inner membranes. Inner membrane-anchored L-OPA1 molecules initiate membrane remodeling by recruiting soluble S-OPA1 to rapidly polymerize into a flexible cylindrical scaffold encaging the mitochondrial inner membrane. Once at the membrane surface, the formation of S-OPA1 helices induce bilayer curvature. OPA1 dimerization through the paddle region, which inserts into cardiolipin-containing membrane, promotes GTP hydrolysis and the helical assembly of a flexible OPA1 lattice on the membrane, which drives membrane curvature and mitochondrial fusion. Excess levels of S-OPA1 produced by cleavage by OMA1 following stress conditions that induce loss of mitochondrial membrane potential, lead to an impaired equilibrium between L-OPA1 and S-OPA1, thereby inhibiting mitochondrial fusion. Plays a role in the maintenance and remodeling of mitochondrial cristae, some invaginations of the mitochondrial inner membrane that provide an increase in the surface area. Probably acts by forming helical filaments at the inside of inner membrane tubes with the shape and dimensions of crista junctions. The protein is Dynamin-like GTPase OPA1, mitochondrial (opa1) of Oncorhynchus masou (Cherry salmon).